The sequence spans 283 residues: Peroxisomal membrane protein PEX18 (283 aa).

The interval 179–201 (SSLEEDVHTEEENSGTSLEDEET) is disordered. Acidic residues predominate over residues 180–200 (SLEEDVHTEEENSGTSLEDEE).

Interacts with PEX7; The interaction with PEX7 stabilizes PEX18. Interacts with PEX13. Post-translationally, ubiquitinated in a UBC4/UBC5 dependent manner.

The protein resides in the cytoplasm. It is found in the peroxisome membrane. Functionally, involved in peroxisome biogenesis and the import of peroxisomal matrix proteins that contain the peroxisomal targeting sequence PTS2. Required for peroxisomal targeting of PEX7 and growth on oleate. This is Peroxisomal membrane protein PEX18 (PEX18) from Saccharomyces cerevisiae (strain ATCC 204508 / S288c) (Baker's yeast).